Consider the following 210-residue polypeptide: Thymidylate kinase (210 aa).

11-18 (GLEGAGKS) is an ATP binding site.

This sequence belongs to the thymidylate kinase family.

The enzyme catalyses dTMP + ATP = dTDP + ADP. Phosphorylation of dTMP to form dTDP in both de novo and salvage pathways of dTTP synthesis. The chain is Thymidylate kinase from Vibrio parahaemolyticus serotype O3:K6 (strain RIMD 2210633).